The primary structure comprises 379 residues: MSEFLPFSRPAMGVEELAAVKEVLESGWITTGPKNQALEQAFCQLTGNQHAIAVSSATAGMHITLMALEIGKGDEVITPSLTWVSTLNMISLLGATPVMVDVDRDTLMVTPEAIESAITPRTKAIIPVHYAGAPADIDAIRAIGERYGIAVIEDAAHAVGTYYKGRHIGAKGTAIFSFHAIKNITCAEGGLIVTDNENLARQLRMLKFHGLGVDAYDRQTWGRAPQAEVLTPGYKYNLTDINAAIAMTQLAKLEYLNTRRREIALQYQQALAALPFQPLSLPAWPHVHAWHLFIIRVDEQRCGISRNALMEALKERGIGTGLHFRAAHTQKYYRERFPTLSLPNTEWNSERICSLPLFPDMTTADADRVITALQQLAGQ.

An N6-(pyridoxal phosphate)lysine modification is found at Lys-182.

It belongs to the DegT/DnrJ/EryC1 family. ArnB subfamily. Homodimer. The cofactor is pyridoxal 5'-phosphate.

The enzyme catalyses UDP-4-amino-4-deoxy-beta-L-arabinose + 2-oxoglutarate = UDP-beta-L-threo-pentopyranos-4-ulose + L-glutamate. The protein operates within nucleotide-sugar biosynthesis; UDP-4-deoxy-4-formamido-beta-L-arabinose biosynthesis; UDP-4-deoxy-4-formamido-beta-L-arabinose from UDP-alpha-D-glucuronate: step 2/3. It functions in the pathway bacterial outer membrane biogenesis; lipopolysaccharide biosynthesis. In terms of biological role, catalyzes the conversion of UDP-4-keto-arabinose (UDP-Ara4O) to UDP-4-amino-4-deoxy-L-arabinose (UDP-L-Ara4N). The modified arabinose is attached to lipid A and is required for resistance to polymyxin and cationic antimicrobial peptides. This chain is UDP-4-amino-4-deoxy-L-arabinose--oxoglutarate aminotransferase, found in Escherichia coli (strain ATCC 8739 / DSM 1576 / NBRC 3972 / NCIMB 8545 / WDCM 00012 / Crooks).